Reading from the N-terminus, the 78-residue chain is D-alanyl carrier protein (78 aa).

The region spanning 1–77 (MDLKEQIVEI…KVVAKVESLI (77 aa)) is the Carrier domain. S35 is modified (O-(pantetheine 4'-phosphoryl)serine).

It belongs to the DltC family. Post-translationally, 4'-phosphopantetheine is transferred from CoA to a specific serine of apo-DCP.

It localises to the cytoplasm. The protein operates within cell wall biogenesis; lipoteichoic acid biosynthesis. In terms of biological role, carrier protein involved in the D-alanylation of lipoteichoic acid (LTA). The loading of thioester-linked D-alanine onto DltC is catalyzed by D-alanine--D-alanyl carrier protein ligase DltA. The DltC-carried D-alanyl group is further transferred to cell membrane phosphatidylglycerol (PG) by forming an ester bond, probably catalyzed by DltD. D-alanylation of LTA plays an important role in modulating the properties of the cell wall in Gram-positive bacteria, influencing the net charge of the cell wall. This chain is D-alanyl carrier protein, found in Leuconostoc mesenteroides subsp. mesenteroides (strain ATCC 8293 / DSM 20343 / BCRC 11652 / CCM 1803 / JCM 6124 / NCDO 523 / NBRC 100496 / NCIMB 8023 / NCTC 12954 / NRRL B-1118 / 37Y).